Here is a 506-residue protein sequence, read N- to C-terminus: (+)-piperitol/(+)-sesamin synthase CYP81Q2 (506 aa).

The helical transmembrane segment at 3–23 threads the bilayer; it reads AEMLYSALALTFAIFMVYRIL. C439 lines the heme pocket.

This sequence belongs to the cytochrome P450 family. Requires heme as cofactor. Expressed in seeds.

The protein resides in the membrane. It catalyses the reaction (+)-piperitol + reduced [NADPH--hemoprotein reductase] + O2 = (+)-sesamin + oxidized [NADPH--hemoprotein reductase] + 2 H2O + H(+). The enzyme catalyses (+)-pinoresinol + reduced [NADPH--hemoprotein reductase] + O2 = (+)-piperitol + oxidized [NADPH--hemoprotein reductase] + 2 H2O + H(+). Its function is as follows. Involved in the biosynthesis of (+)-sesamin, a furofuran class lignan. Functions in a dual catalytic mode. Catalyzes the synthesis of (+)-sesamin from (+)- pinoresinol by formation of two successive methylenedioxy bridges on (+)-pinoresinol and (+)-piperitol, respectively. The chain is (+)-piperitol/(+)-sesamin synthase CYP81Q2 from Sesamum radiatum (Black benniseed).